The following is a 447-amino-acid chain: GTPase Der (447 aa).

2 consecutive EngA-type G domains span residues 4-165 and 180-357; these read KIIT…SVEE and LQIV…KIWN. GTP contacts are provided by residues 10–17, 57–61, 119–122, 186–193, 233–237, and 298–301; these read GRPNVGKS, DTPGL, NKCE, GRPNAGKS, DTAGL, and NKWD. In terms of domain architecture, KH-like spans 358–443; that stretch reads KKITTNKLNK…PIRFTYVKNK (86 aa).

This sequence belongs to the TRAFAC class TrmE-Era-EngA-EngB-Septin-like GTPase superfamily. EngA (Der) GTPase family. As to quaternary structure, associates with the 50S ribosomal subunit.

GTPase that plays an essential role in the late steps of ribosome biogenesis. The polypeptide is GTPase Der (Rickettsia prowazekii (strain Madrid E)).